The primary structure comprises 319 residues: Pantothenate kinase (319 aa).

101–108 (GSVAVGKS) contacts ATP.

It belongs to the prokaryotic pantothenate kinase family.

Its subcellular location is the cytoplasm. The enzyme catalyses (R)-pantothenate + ATP = (R)-4'-phosphopantothenate + ADP + H(+). Its pathway is cofactor biosynthesis; coenzyme A biosynthesis; CoA from (R)-pantothenate: step 1/5. The chain is Pantothenate kinase from Clavibacter michiganensis subsp. michiganensis (strain NCPPB 382).